The chain runs to 53 residues: uncharacterized protein (53 aa).

Residues 14-33 (SPSSLNNNNNINSKSLQINS) are compositionally biased toward low complexity. The segment at 14–53 (SPSSLNNNNNINSKSLQINSENKSKIQNNNPLGNKGGVQF) is disordered.

This is an uncharacterized protein from Dictyostelium discoideum (Social amoeba).